Reading from the N-terminus, the 215-residue chain is MAKSTVNKLSVSVRTNTGKGASRRARRDGKVPAVLYGHGEEPQHLELPAHAFSAVLRHVGTNAVLTLEVAGKEQLALTKAIDVHPIRHTIMHADLLVVRSGEKIVVEVPVEVEGDAGPDILVTQETTSIEIEAEALSIPEQLTMSIEGAEPGTQFTARQIPLPVGVTLVSDPEMLVVNVVNAPTDAQTKAKYAGEAHEAPEVGTAENKTAATESE.

2 stretches are compositionally biased toward polar residues: residues 1–19 (MAKS…NTGK) and 206–215 (ENKTAATESE). Disordered regions lie at residues 1-29 (MAKS…RRDG) and 190-215 (AKYA…TESE).

The protein belongs to the bacterial ribosomal protein bL25 family. CTC subfamily. Part of the 50S ribosomal subunit; part of the 5S rRNA/L5/L18/L25 subcomplex. Contacts the 5S rRNA. Binds to the 5S rRNA independently of L5 and L18.

This is one of the proteins that binds to the 5S RNA in the ribosome where it forms part of the central protuberance. The sequence is that of Large ribosomal subunit protein bL25 from Mycobacterium leprae (strain TN).